A 590-amino-acid polypeptide reads, in one-letter code: Cationic amino acid transporter 8, vacuolar (590 aa).

Over 1 to 85 (MIPASMEEAH…ESENPMRRCL (85 aa)) the chain is Cytoplasmic. The helical transmembrane segment at 86–106 (TWWDLLWLSFGSVVGSGVFVI) threads the bilayer. Residues 107-114 (TGQEARVG) are Vacuolar-facing. The chain crosses the membrane as a helical span at residues 115-135 (AGPAVVLSYAISGVSALLSVL). Residues 136-160 (CYAEFGVEIPVAGGSFSYLRVELGD) are Cytoplasmic-facing. Residues 161–181 (FIAFIAAGNILLEAMVGAAGL) traverse the membrane as a helical segment. At 182-209 (GRSWSSYLASLVKNDSDYFRIKVDSFAK) the chain is on the vacuolar side. N195 carries N-linked (GlcNAc...) asparagine glycosylation. A helical membrane pass occupies residues 210–230 (GFDLLDPVAVAVLLVANGIAM). The Cytoplasmic segment spans residues 231 to 238 (TGTKRTSW). A helical transmembrane segment spans residues 239-259 (LNLITSMVTVCIIVFIVVVGF). The Vacuolar portion of the chain corresponds to 260 to 266 (THSKTSN). A helical transmembrane segment spans residues 267-287 (LVPFFPYGAKGVVQSAAVVYW). The Cytoplasmic segment spans residues 288–310 (SYTGFDMVANMAEETEKPSRDIP). Residues 311–331 (IGLVGSMSMITVVYCLMALAL) traverse the membrane as a helical segment. The Vacuolar portion of the chain corresponds to 332–359 (TMMVKYTEIDANAAYSVAFAQIGMKWAK). The chain crosses the membrane as a helical span at residues 360 to 380 (YLVGICALKGMTTSLLVGSLG). Over 381 to 407 (QARYTTQIARSHMIPPWFALVHPKTGT) the chain is Cytoplasmic. Residues 408–428 (PIYATLLVTILSSIISFFTSL) traverse the membrane as a helical segment. E429 is a topological domain (vacuolar). A helical membrane pass occupies residues 430 to 450 (VLSSVFSFATLFIFMLVAVAL). At 451–465 (LVRRYYVKDVTPEAG) the chain is on the cytoplasmic side. A helical membrane pass occupies residues 466-486 (LLKFLGFLFLIIASSIGVSAL). The Vacuolar segment spans residues 487–493 (WNSGVKG). Residues 494–514 (WIAYTVTGVIWFIGTLGLALL) form a helical membrane-spanning segment. At 515 to 522 (PKYRVPKV) the chain is on the cytoplasmic side. The chain crosses the membrane as a helical span at residues 523–543 (WGVPLVPWLPSFSIAMNLFLI). Over 544-553 (GSLGYVAFLR) the chain is Vacuolar. The helical transmembrane segment at 554 to 574 (FIICTMVMLLYYLFVGLHATY) threads the bilayer. Residues 575-590 (DVAHQPLEEAKFEGER) are Cytoplasmic-facing.

Belongs to the amino acid-polyamine-organocation (APC) superfamily. Cationic amino acid transporter (CAT) (TC 2.A.3.3) family. Expressed in roots, stems, flowers and leaves. Mostly present in young and rapidly dividing tissues such as the shoot and root apical meristem, and in young leaves and petioles during seedling development.

The protein localises to the cell membrane. Its function is as follows. Permease involved in the transport of the cationic neutral or acidic amino acids. In Arabidopsis thaliana (Mouse-ear cress), this protein is Cationic amino acid transporter 8, vacuolar (CAT8).